A 2641-amino-acid polypeptide reads, in one-letter code: CCR4-NOT transcription complex subunit let-711 (2641 aa).

The LXXLL motif lies at 660 to 664 (LSELL). Disordered regions lie at residues 771–887 (SGRS…QNAQ), 936–963 (TQRQNSNSGWHAAPAPQRPSGPPTPQQQ), 1197–1221 (EGGRHTPVGSAQAGSASSTPTPAAA), 1518–1565 (QSKI…SQGA), and 2034–2054 (GMNNAMNNGAGNAAHHHAGLQ). Low complexity-rich tracts occupy residues 774 to 795 (SSSVSSGGHVQQSSGSQPQQQQ), 802 to 839 (LPPSGVVPVQQQPQQPPSLQQQHSQQSLPTPPTTSQQQ), and 853 to 877 (PAQFAPQPMFPPQAQAQHQHQHMMG). Pro residues predominate over residues 951–960 (PQRPSGPPTP). Residues 1205-1221 (GSAQAGSASSTPTPAAA) show a composition bias toward low complexity. The segment covering 2034–2046 (GMNNAMNNGAGNA) has biased composition (low complexity). Positions 2341–2345 (LRVLL) match the LXXLL motif. Positions 2609 to 2641 (AQGSQPQAQPDGAPGPLGNNTGAANQQQNPNTN) are disordered.

It belongs to the CNOT1 family. Component of the CCR4-NOT complex at least composed of ccf-1, ccr-4 and let-711, which is required for germ cell development in hermaphrodites. Within the complex interacts with ccf-1 and ccr-4; the interactions are direct. In terms of tissue distribution, highly expressed in the germline of hermaphrodites.

Its subcellular location is the nucleus. Its function is as follows. Scaffolding component of the CCR4-NOT complex which is one of the major cellular mRNA deadenylases and is linked to various cellular processes including bulk mRNA degradation, miRNA-mediated repression, translational repression during translational initiation and general transcription regulation. Positively regulates the accumulation of the CCR4-NOT complex component ccr-1. Within the complex promotes germ cell development and fertility in hermaphrodites. Additional complex functions may be a consequence of its influence on mRNA expression. Its scaffolding function implies its interaction with the catalytic complex module and diverse RNA-binding proteins mediating the complex recruitment to selected mRNA 3'UTRs. Mediates the recruitment of the CCR4-NOT complex to miRNA targets and to the RISC complex. Acts as a transcriptional repressor. Represses the ligand-dependent transcriptional activation by nuclear receptors. In embryos, plays a role in female pronucleus and mitotic spindle positioning during the first cleavage divisions after fertilization. This may partly be through negatively regulating the accumulation of zyg-9 at the centrosome. Negatively regulates the formation of long astral microtubules in developing embryos. Required for the stabilization and degradation of maternal mRNAs such as nos-2 in somatic blastomeres. This Caenorhabditis elegans protein is CCR4-NOT transcription complex subunit let-711.